The sequence spans 129 residues: M-zodatoxin-Lt8k (129 aa).

A signal peptide spans 1–20 (MKYFVVALALVAAFACIAES). Residues 21–60 (KPAESEHELAEVEEENELADLEDAVWLEHLADLSDLEEAR) constitute a propeptide that is removed on maturation.

It belongs to the cationic peptide 06 (cytoinsectotoxin) family. Expressed by the venom gland.

The protein localises to the secreted. Functionally, insecticidal, cytolytic and antimicrobial peptide. Forms voltage-dependent, ion-permeable channels in membranes. At high concentration causes cell membrane lysis. This chain is M-zodatoxin-Lt8k (cit 1-10), found in Lachesana tarabaevi (Spider).